A 1175-amino-acid chain; its full sequence is MRFSRIPPIFANVVRQTHYRNYANGVIKPREFNKVMVANRGEIAIRVFRALTELNKTSVAIYAEQDKNSMHRLKADEAYLVGKGLPPVAAYLTIDQIIETALKHNIDAIHPGYGFLSERSDFAAACQNAGIVFIGPSPDVMARMGDKVAARQAAIEAGVQVVPGTPGPITTADEAVEFAKQYGTPIILKAAYGGGGRGIRRVDKLEEVEEAFRRSYSEAQAAFGDGSLFVEKFVERPRHIEVQLLGDHHGNIVHLYERDCSVQRRHQKVVEIAPAPALPEGVREKILADALRLARHVGYQNAGTVEFLVDQKGNYYFIEVNARLQVEHTVTEEITGVDLVQAQIRIAEGKSLDDLKLSQETIQTTGSAIQCRVTTEDPAKGFQPDSGRIEVFRSGEGMGIRLDSASAFAGSVISPHYDSLMVKVIASARNHPNAAAKMIRALKKFRIRGVKTNIPFLLNVLRQPSFLDASVDTYFIDEHPELFQFKPSQNRAQKLLNYLGEVKVNGPTTPLATDLKPAVVSPPIPYIPAGAKPPTGLRDVLVQRGPTEFAKEVRSRPGCMITDTTFRDAHQSLLATRVRTYDMAAISPFVAQSFNGLFSLENWGGATFDVSMRFLHECPWERLQTLRKLIPNIPFQCLLRGANAMGYSNYPDNVIYKFCELAVKNGMDVFRVFDSLNYLPNLLVGMEAVGKAGGVVEAAIAYTGDVTDKSRDKYDLKYYLNLADQLVKAQAHILSIKDMAGVLKPEAAKLLIGALRDKFPDIPIHVHTHDTSGAGVAAMLECAKAGADVVDAAVDSMSGMTSQPSMGAIVASLQGTKHDTGLSLDDISKYSAYWESTRQLYAPFECATTMKSGNADVYKHEIPGGQYTNLQFQAFSLGLGPQFDEVKRMYREANLVLGDIIKVTPSSKIVGDLAQFMVQNNLTRETLVDRADDLSFPKSVVDFMQGNVGQPPYGFPEPLRTKVLRGKPKVDGRPGENAKPVDLDAVKVELEEKHGRTLSEEDVMSYSMFPTVFDEFETFRQQYGPVDKLPTRLFLTGLEIAEEVDVEIESGKTLAIQLLAEGKLNKRGEREVFFDLNGQMRSIFVVDKEASKEIVTRPRALPGVRGHIGAPMPGDVLELKIKEGDKVTKKQPLFVLSAMKMEMVIDSPIAGTVKAIHAPQGTKCSAGDLVVEVEP.

The region spanning glutamate 31–glutamate 481 is the Biotin carboxylation domain. Lysine 147, glutamate 231, and histidine 266 together coordinate ATP. Residues arginine 151 to glutamate 348 form the ATP-grasp domain. Residue arginine 323 is part of the active site. The 270-residue stretch at cysteine 559–serine 828 folds into the Pyruvate carboxyltransferase domain. Residues arginine 567–glutamine 571 and arginine 640 contribute to the substrate site. Aspartate 568 contributes to the a divalent metal cation binding site. Lysine 737, histidine 767, and histidine 769 together coordinate a divalent metal cation. Lysine 737 is subject to N6-carboxylysine. Threonine 904 is a substrate binding site. The Biotinyl-binding domain maps to arginine 1099 to glutamate 1174. N6-biotinyllysine is present on lysine 1140.

Interacts with sir-2.2 and sir-2.3. The cofactor is biotin. Zn(2+) serves as cofactor.

Its subcellular location is the cytoplasm. The catalysed reaction is hydrogencarbonate + pyruvate + ATP = oxaloacetate + ADP + phosphate + H(+). It participates in carbohydrate biosynthesis; gluconeogenesis. Its function is as follows. Pyruvate carboxylase catalyzes a 2-step reaction, involving the ATP-dependent carboxylation of the covalently attached biotin in the first step and the transfer of the carboxyl group to pyruvate in the second. This Caenorhabditis elegans protein is Pyruvate carboxylase 1.